Consider the following 586-residue polypeptide: Protein HOL1 (586 aa).

Residues 1 to 66 (MDKYTNRDHP…NWSSWRKLAH (66 aa)) lie on the Extracellular side of the membrane. A helical membrane pass occupies residues 67-87 (FGLMAFITAFTAATSNDAGAA). Residues 88 to 103 (QDSLNEIYGISYDSMN) lie on the Cytoplasmic side of the membrane. Residues 104-124 (TGAGVLFLGIGWSTLFLAPFA) traverse the membrane as a helical segment. Residues 125 to 130 (NLYGRK) lie on the Extracellular side of the membrane. A helical membrane pass occupies residues 131-151 (ITYIVCTTLGLFGALWFALAK). The Cytoplasmic portion of the chain corresponds to 152–189 (RTSDTIWSQLFVGISESCAEAQVQLSLSDIFFQHQLGS). The chain crosses the membrane as a helical span at residues 190–210 (VLTVYIMCTSIGTFLGPLIAG). The Extracellular segment spans residues 211 to 219 (YISAFTNFR). A helical transmembrane segment spans residues 220–240 (WVGWVAVIISGGLLITIIFGC). Topologically, residues 241–362 (EETYFDRGQY…YFKYLKINLR (122 aa)) are cytoplasmic. The chain crosses the membrane as a helical span at residues 363 to 383 (MFLFPPVWLSGMFWGIQDVFL). At 384-413 (TFYLTTQESAYYEPPWNYSDFGVAIMNVPT) the chain is on the extracellular side. A helical transmembrane segment spans residues 414–434 (LIGAVIGCICAGIVSDYFVLW). Over 435–448 (MARHNRGILEAEFR) the chain is Cytoplasmic. Residues 449–469 (LYFSIATAIIGPAGLLMFGIG) traverse the membrane as a helical segment. Residues 470–477 (TARQWPWQ) lie on the Extracellular side of the membrane. The helical transmembrane segment at 478–498 (AIYVGLGFVGFAWGCSGDIAM) threads the bilayer. The Cytoplasmic portion of the chain corresponds to 499-508 (AYLMDCYPDM). Residues 509–529 (VLEGMVCTAIINNTISCIFTF) traverse the membrane as a helical segment. Over 530-544 (TCSDWLAASGTENTY) the chain is Extracellular. Residues 545-565 (IALAVINFGITAFALPMYYYG) form a helical membrane-spanning segment. Residues 566 to 586 (KRIRLWTKRWYLQSVNLRDGV) lie on the Cytoplasmic side of the membrane.

It localises to the membrane. Functionally, seems to be involved in the uptake of several cations and of histidinol. The sequence is that of Protein HOL1 (HOL1) from Saccharomyces cerevisiae (strain ATCC 204508 / S288c) (Baker's yeast).